The following is a 152-amino-acid chain: Transposase for insertion sequence element IS200 (152 aa).

Mg(2+) is bound by residues histidine 61 and histidine 63. The Nucleophile role is filled by tyrosine 125. Glutamine 129 is a Mg(2+) binding site.

Belongs to the transposase 17 family. As to quaternary structure, homodimer. Mg(2+) is required as a cofactor.

Functionally, transposase responsible for transposition of the IS200 insertion sequence (IS) element. Transposition occurs in 2 main steps, excision from the donor DNA 'top strand' into a single strand circle and its subsequent reinsertion into the DNA target. This increases the copy number of the IS. The protein is Transposase for insertion sequence element IS200 (tnpA1) of Salmonella typhi.